We begin with the raw amino-acid sequence, 479 residues long: Phosphatidylinositol 4-kinase type 2-alpha (479 aa).

Residue methionine 1 is modified to N-acetylmethionine. Residues 1 to 58 (MDETSPLVSPERAQPPEYTFPSGSGAHFPQVPGGAVRVAAAAGSGPSPPCSPGHDRER) form a disordered region. Phosphoserine is present on residues serine 5, serine 9, serine 44, serine 47, and serine 51. A compositionally biased stretch (low complexity) spans 31-45 (VPGGAVRVAAAAGSG). The region spanning 124 to 453 (SIYPERIYQG…VQMPPVIVET (330 aa)) is the PI3K/PI4K catalytic domain. The segment at 130–136 (IYQGSSG) is G-loop. ATP contacts are provided by residues 131-137 (YQGSSGS) and lysine 152. The important for substrate binding stretch occupies residues 157–159 (EPY). The tract at residues 165–178 (KWTKWLQKLCCPCC) is important for interaction with membranes. 4 S-palmitoyl cysteine lipidation sites follow: cysteine 174, cysteine 175, cysteine 177, and cysteine 178. Residue 261 to 264 (QLFV) coordinates ATP. The segment at 268–276 (KDADYWLRR) is important for interaction with membranes. Positions 305–313 (RNTDRGNDN) are catalytic loop. Residues 344–364 (AIDNGLAFPLKHPDSWRAYPF) form an activation loop region. ATP is bound at residue aspartate 346. Residues 359–368 (WRAYPFYWAW) are important for interaction with membranes. Serine 462 is modified (phosphoserine).

Belongs to the PI3/PI4-kinase family. Type II PI4K subfamily. Associates with the BLOC-1 and the AP-3 complexes; the BLOC-1 complex is required for optimal binding of PI4K2A to the AP-3 complex. Interacts with BLOC1S5 and DTNBP1. Interacts with ITCH. Interacts with FOS; this interaction may enhance phosphatidylinositol phosphorylation activity. Interacts with ATG9A. In terms of processing, palmitoylated by ZDHHC3 and ZDHHC7 in the CCPCC motif. Palmitoylation is cholesterol-dependent, and required for TGN localization. Ubiquitinated by ITCH; this does not lead to proteasomal degradation. As to expression, detected in brain (at protein level).

It is found in the golgi apparatus. Its subcellular location is the trans-Golgi network membrane. The protein resides in the membrane raft. It localises to the endosome. The protein localises to the endosome membrane. It is found in the cytoplasmic vesicle. Its subcellular location is the cell projection. The protein resides in the dendrite. It localises to the presynaptic cell membrane. The protein localises to the synapse. It is found in the synaptosome. Its subcellular location is the mitochondrion. The protein resides in the membrane. It localises to the cell membrane. The protein localises to the perikaryon. It is found in the neuron projection. It carries out the reaction a 1,2-diacyl-sn-glycero-3-phospho-(1D-myo-inositol) + ATP = a 1,2-diacyl-sn-glycero-3-phospho-(1D-myo-inositol 4-phosphate) + ADP + H(+). Its function is as follows. Membrane-bound phosphatidylinositol-4 kinase (PI4-kinase) that catalyzes the phosphorylation of phosphatidylinositol (PI) to phosphatidylinositol 4-phosphate (PI4P), a lipid that plays important roles in endocytosis, Golgi function, protein sorting and membrane trafficking and is required for prolonged survival of neurons. Besides, phosphorylation of phosphatidylinositol (PI) to phosphatidylinositol 4-phosphate (PI4P) is the first committed step in the generation of phosphatidylinositol 4,5-bisphosphate (PIP2), a precursor of the second messenger inositol 1,4,5-trisphosphate (InsP3). In Mus musculus (Mouse), this protein is Phosphatidylinositol 4-kinase type 2-alpha (Pi4k2a).